The primary structure comprises 413 residues: Arginine biosynthesis bifunctional protein ArgJ (413 aa).

The substrate site is built by threonine 158, lysine 184, threonine 195, glutamate 285, asparagine 408, and serine 413. The active-site Nucleophile is the threonine 195.

It belongs to the ArgJ family. Heterotetramer of two alpha and two beta chains.

Its subcellular location is the cytoplasm. The enzyme catalyses N(2)-acetyl-L-ornithine + L-glutamate = N-acetyl-L-glutamate + L-ornithine. The catalysed reaction is L-glutamate + acetyl-CoA = N-acetyl-L-glutamate + CoA + H(+). Its pathway is amino-acid biosynthesis; L-arginine biosynthesis; L-ornithine and N-acetyl-L-glutamate from L-glutamate and N(2)-acetyl-L-ornithine (cyclic): step 1/1. It functions in the pathway amino-acid biosynthesis; L-arginine biosynthesis; N(2)-acetyl-L-ornithine from L-glutamate: step 1/4. In terms of biological role, catalyzes two activities which are involved in the cyclic version of arginine biosynthesis: the synthesis of N-acetylglutamate from glutamate and acetyl-CoA as the acetyl donor, and of ornithine by transacetylation between N(2)-acetylornithine and glutamate. The chain is Arginine biosynthesis bifunctional protein ArgJ from Rhizobium meliloti (strain 1021) (Ensifer meliloti).